Reading from the N-terminus, the 297-residue chain is Putative S-adenosyl-L-methionine-dependent methyltransferase Mjls_1072 (297 aa).

S-adenosyl-L-methionine contacts are provided by residues Asp124 and 153 to 154 (DL).

It belongs to the UPF0677 family.

Functionally, exhibits S-adenosyl-L-methionine-dependent methyltransferase activity. The polypeptide is Putative S-adenosyl-L-methionine-dependent methyltransferase Mjls_1072 (Mycobacterium sp. (strain JLS)).